Here is a 291-residue protein sequence, read N- to C-terminus: Proteasomal ubiquitin receptor ADRM1 homolog rpn1301 (291 aa).

The Pru domain maps to 1–114; it reads MSLITFKAGK…ERINSYIKDQ (114 aa). The interval 135–162 is disordered; the sequence is TVEQSEPIAQPTESSKESSEIGAPNSDE. In terms of domain architecture, DEUBAD spans 178 to 290; the sequence is AQAGFGGSTV…ARFVSRNNGS (113 aa).

The protein belongs to the ADRM1 family. As to quaternary structure, component of the 19S proteasome regulatory particle complex. The 2 S.pombe rpn13 homologs, rpn1301 and rpn1302 are present at a 0.2-1 ratio.

It is found in the cytoplasm. Its subcellular location is the nucleus. In terms of biological role, component of the 26S proteasome, a multiprotein complex involved in the ATP-dependent degradation of ubiquitinated proteins. This complex plays a key role in the maintenance of protein homeostasis by removing misfolded or damaged proteins, which could impair cellular functions, and by removing proteins whose functions are no longer required. Therefore, the proteasome participates in numerous cellular processes, including cell cycle progression, apoptosis, or DNA damage repair. Within the complex, functions as a proteasomal ubiquitin receptor. The sequence is that of Proteasomal ubiquitin receptor ADRM1 homolog rpn1301 (rpn1301) from Schizosaccharomyces pombe (strain 972 / ATCC 24843) (Fission yeast).